We begin with the raw amino-acid sequence, 381 residues long: uncharacterized protein (381 aa).

Positions 1-16 (MQTLLFYFFFINLIFA) are cleaved as a signal peptide. Over 17–303 (HDLNVKTYKP…KILENSPCPN (287 aa)) the chain is Lumenal. Cysteines 118 and 149 form a disulfide. N-linked (GlcNAc...) asparagine glycans are attached at residues asparagine 133, asparagine 192, asparagine 225, asparagine 243, asparagine 246, and asparagine 287. The helical transmembrane segment at 304–324 (QPSIQPFGILMMLVSTIYGNF) threads the bilayer. Topologically, residues 325–359 (KNLYNCIKRNTIGYIYNSIYDFWITEGMLFPMRNM) are cytoplasmic. Residues 360–380 (DIFKITAISIGLSIPVFLWLL) traverse the membrane as a helical segment. Lysine 381 is a topological domain (lumenal).

Belongs to the calreticulin family.

The protein resides in the endoplasmic reticulum membrane. This is an uncharacterized protein from Schizosaccharomyces pombe (strain 972 / ATCC 24843) (Fission yeast).